Reading from the N-terminus, the 369-residue chain is Putative glutamate--cysteine ligase 2-1 (369 aa).

The protein belongs to the glutamate--cysteine ligase type 2 family. YbdK subfamily.

It carries out the reaction L-cysteine + L-glutamate + ATP = gamma-L-glutamyl-L-cysteine + ADP + phosphate + H(+). ATP-dependent carboxylate-amine ligase which exhibits weak glutamate--cysteine ligase activity. In Rhodococcus jostii (strain RHA1), this protein is Putative glutamate--cysteine ligase 2-1.